The sequence spans 421 residues: Forkhead box protein J1 (421 aa).

Disordered stretches follow at residues 1-32 (MAES…LDDS) and 77-110 (ADPA…PPPD). Over residues 11 to 21 (AGPGEEAGPEG) the composition is skewed to gly residues. Polar residues predominate over residues 90 to 99 (KPTSSCTSRS). A DNA-binding region (fork-head) is located at residues 120 to 210 (VKPPYSYATL…YAERLLSGAF (91 aa)).

Belongs to the FOXJ1 family. As to expression, predominantly expressed in tissues containing motile cilia.

It localises to the nucleus. Transcription factor specifically required for the formation of motile cilia. Acts by activating transcription of genes that mediate assembly of motile cilia, such as CFAP157. Binds the DNA consensus sequences 5'-HWDTGTTTGTTTA-3' or 5'-KTTTGTTGTTKTW-3' (where H is not G, W is A or T, D is not C, and K is G or T). Activates the transcription of a variety of ciliary proteins in the developing brain and lung. This chain is Forkhead box protein J1, found in Mus musculus (Mouse).